A 315-amino-acid polypeptide reads, in one-letter code: L-lactate dehydrogenase (315 aa).

NAD(+)-binding positions include Val17, Asp38, Lys43, Tyr69, and 83–84 (GA). Substrate contacts are provided by residues Gln86, Arg92, and 124–127 (NPVD). NAD(+) contacts are provided by residues 122–124 (ATN) and Ser147. Residue 152–155 (DTAR) coordinates substrate. The beta-D-fructose 1,6-bisphosphate site is built by Arg157 and His172. His179 (proton acceptor) is an active-site residue. Position 224 is a phosphotyrosine (Tyr224). Residue Thr233 coordinates substrate.

Belongs to the LDH/MDH superfamily. LDH family. As to quaternary structure, homotetramer.

Its subcellular location is the cytoplasm. It carries out the reaction (S)-lactate + NAD(+) = pyruvate + NADH + H(+). It functions in the pathway fermentation; pyruvate fermentation to lactate; (S)-lactate from pyruvate: step 1/1. Allosterically activated by fructose 1,6-bisphosphate (FBP). Catalyzes the conversion of lactate to pyruvate. This Bacillus pumilus (strain SAFR-032) protein is L-lactate dehydrogenase.